A 324-amino-acid chain; its full sequence is Homoserine kinase (324 aa).

100-110 contacts ATP; it reads PLSSGMGSSAA.

The protein belongs to the GHMP kinase family. Homoserine kinase subfamily.

The protein localises to the cytoplasm. The enzyme catalyses L-homoserine + ATP = O-phospho-L-homoserine + ADP + H(+). Its pathway is amino-acid biosynthesis; L-threonine biosynthesis; L-threonine from L-aspartate: step 4/5. Catalyzes the ATP-dependent phosphorylation of L-homoserine to L-homoserine phosphate. The sequence is that of Homoserine kinase from Chlorobaculum tepidum (strain ATCC 49652 / DSM 12025 / NBRC 103806 / TLS) (Chlorobium tepidum).